Here is a 194-residue protein sequence, read N- to C-terminus: Adenylate kinase isoenzyme 1 (194 aa).

Position 1 is an N-acetylmethionine (M1). 18–23 is a binding site for ATP; the sequence is GSGKGT. The residue at position 38 (S38) is a Phosphoserine. The interval 38–67 is NMP; it reads STGDLLRAEVSSGSARGKMLSEIMEKGQLV. AMP is bound by residues T39, R44, 65-67, 94-97, and Q101; these read QLV and GYPR. Residues 131–141 are LID; that stretch reads KRGETSGRVDD. R132 is an ATP binding site. R138 and R149 together coordinate AMP. Residue G177 coordinates ATP.

This sequence belongs to the adenylate kinase family. AK1 subfamily. In terms of assembly, monomer. It depends on Mg(2+) as a cofactor.

The protein resides in the cytoplasm. It catalyses the reaction a ribonucleoside 5'-phosphate + ATP = a ribonucleoside 5'-diphosphate + ADP. The catalysed reaction is AMP + ATP = 2 ADP. The enzyme catalyses dAMP + ATP = dADP + ADP. It carries out the reaction dATP + AMP = dADP + ADP. It catalyses the reaction dAMP + dATP = 2 dADP. The catalysed reaction is a 2'-deoxyribonucleoside 5'-diphosphate + ATP = a 2'-deoxyribonucleoside 5'-triphosphate + ADP. The enzyme catalyses a ribonucleoside 5'-diphosphate + ATP = a ribonucleoside 5'-triphosphate + ADP. It carries out the reaction CDP + GTP = CTP + GDP. It catalyses the reaction GDP + ATP = GTP + ADP. The catalysed reaction is UDP + ATP = UTP + ADP. The enzyme catalyses GTP + UDP = UTP + GDP. It carries out the reaction dTDP + GTP = dTTP + GDP. It catalyses the reaction dCDP + GTP = dCTP + GDP. The catalysed reaction is dGDP + ATP = dGTP + ADP. The enzyme catalyses dADP + GTP = dATP + GDP. It carries out the reaction thiamine diphosphate + ADP = thiamine triphosphate + AMP. In terms of biological role, catalyzes the reversible transfer of the terminal phosphate group between ATP and AMP. Also displays broad nucleoside diphosphate kinase activity. Plays an important role in cellular energy homeostasis and in adenine nucleotide metabolism. Also catalyzes at a very low rate the synthesis of thiamine triphosphate (ThTP) from thiamine diphosphate (ThDP) and ADP. In Bos taurus (Bovine), this protein is Adenylate kinase isoenzyme 1.